We begin with the raw amino-acid sequence, 61 residues long: Large ribosomal subunit protein uL30 (61 aa).

The protein belongs to the universal ribosomal protein uL30 family. As to quaternary structure, part of the 50S ribosomal subunit.

In Frankia alni (strain DSM 45986 / CECT 9034 / ACN14a), this protein is Large ribosomal subunit protein uL30.